Consider the following 185-residue polypeptide: Peptidyl-tRNA hydrolase (185 aa).

Position 14 (tyrosine 14) interacts with tRNA. Histidine 19 functions as the Proton acceptor in the catalytic mechanism. Residues tyrosine 65, asparagine 67, and asparagine 113 each contribute to the tRNA site.

It belongs to the PTH family. As to quaternary structure, monomer.

The protein resides in the cytoplasm. It catalyses the reaction an N-acyl-L-alpha-aminoacyl-tRNA + H2O = an N-acyl-L-amino acid + a tRNA + H(+). Functionally, hydrolyzes ribosome-free peptidyl-tRNAs (with 1 or more amino acids incorporated), which drop off the ribosome during protein synthesis, or as a result of ribosome stalling. Its function is as follows. Catalyzes the release of premature peptidyl moieties from peptidyl-tRNA molecules trapped in stalled 50S ribosomal subunits, and thus maintains levels of free tRNAs and 50S ribosomes. This is Peptidyl-tRNA hydrolase from Rickettsia rickettsii (strain Iowa).